The chain runs to 352 residues: Holliday junction branch migration complex subunit RuvB (352 aa).

Residues 1–182 (MRIELLNTPP…FGINSRFDYY (182 aa)) form a large ATPase domain (RuvB-L) region. Residues I21, R22, G63, K66, T67, T68, 129–131 (EDF), R172, Y182, and R219 each bind ATP. T67 is a Mg(2+) binding site. Positions 183–253 (EPELLTRIII…IAMKTLECLE (71 aa)) are small ATPAse domain (RuvB-S). A head domain (RuvB-H) region spans residues 256–352 (EEGLDEMDKK…LPLFDESEAD (97 aa)). DNA-binding residues include R292, R311, and R316.

The protein belongs to the RuvB family. In terms of assembly, homohexamer. Forms an RuvA(8)-RuvB(12)-Holliday junction (HJ) complex. HJ DNA is sandwiched between 2 RuvA tetramers; dsDNA enters through RuvA and exits via RuvB. An RuvB hexamer assembles on each DNA strand where it exits the tetramer. Each RuvB hexamer is contacted by two RuvA subunits (via domain III) on 2 adjacent RuvB subunits; this complex drives branch migration. In the full resolvosome a probable DNA-RuvA(4)-RuvB(12)-RuvC(2) complex forms which resolves the HJ.

Its subcellular location is the cytoplasm. It catalyses the reaction ATP + H2O = ADP + phosphate + H(+). Functionally, the RuvA-RuvB-RuvC complex processes Holliday junction (HJ) DNA during genetic recombination and DNA repair, while the RuvA-RuvB complex plays an important role in the rescue of blocked DNA replication forks via replication fork reversal (RFR). RuvA specifically binds to HJ cruciform DNA, conferring on it an open structure. The RuvB hexamer acts as an ATP-dependent pump, pulling dsDNA into and through the RuvAB complex. RuvB forms 2 homohexamers on either side of HJ DNA bound by 1 or 2 RuvA tetramers; 4 subunits per hexamer contact DNA at a time. Coordinated motions by a converter formed by DNA-disengaged RuvB subunits stimulates ATP hydrolysis and nucleotide exchange. Immobilization of the converter enables RuvB to convert the ATP-contained energy into a lever motion, pulling 2 nucleotides of DNA out of the RuvA tetramer per ATP hydrolyzed, thus driving DNA branch migration. The RuvB motors rotate together with the DNA substrate, which together with the progressing nucleotide cycle form the mechanistic basis for DNA recombination by continuous HJ branch migration. Branch migration allows RuvC to scan DNA until it finds its consensus sequence, where it cleaves and resolves cruciform DNA. This is Holliday junction branch migration complex subunit RuvB from Chlorobium chlorochromatii (strain CaD3).